Consider the following 164-residue polypeptide: Transcriptional regulator MraZ (164 aa).

SpoVT-AbrB domains are found at residues 7–63 and 92–135; these read REQH…EPAV and LDQL…NPDR.

This sequence belongs to the MraZ family. In terms of assembly, forms oligomers.

Its subcellular location is the cytoplasm. It localises to the nucleoid. The sequence is that of Transcriptional regulator MraZ from Chlorobaculum parvum (strain DSM 263 / NCIMB 8327) (Chlorobium vibrioforme subsp. thiosulfatophilum).